A 548-amino-acid chain; its full sequence is Sesquiterpene synthase 9 (548 aa).

Residues D300, D304, and E453 each coordinate Mg(2+). The DDXXD motif motif lies at 300 to 304 (DDTFD).

The protein belongs to the terpene synthase family. Tpsa subfamily. The cofactor is Mg(2+). Mn(2+) serves as cofactor. As to expression, mostly expressed in stem and trichomes, to a lower extent in roots, leaves and flowers and, at low levels, in fruits.

It is found in the cytoplasm. It catalyses the reaction (2E,6E)-farnesyl diphosphate = germacrene C + diphosphate. It carries out the reaction (2E)-geranyl diphosphate = terpinolene + diphosphate. The catalysed reaction is (2E)-geranyl diphosphate = limonene + diphosphate. The enzyme catalyses (2E)-geranyl diphosphate = beta-myrcene + diphosphate. It catalyses the reaction (2Z,6Z)-farnesyl diphosphate = germacrene C + diphosphate. It participates in secondary metabolite biosynthesis; terpenoid biosynthesis. Its function is as follows. Involved in the biosynthesis of germacrene C, one of the most abundant sesquiterpene in the leaf oil of tomato. Produces mainly germacrene C, but also smaller amounts of germacrene A, B and D when used with farnesyl diphosphate (FPP) as substrate; able to use both (2E,6E)-farnesyl diphosphate ((EE)-FPP) and (2Z,6Z)-farnesyl diphosphate ((ZZ)-FPP). No or low activity with geranylgeranyl diphosphate (GGPP). Can act with a low efficiency as a monoterpene synthase with geranyl diphosphate (GPP) as substrate, thus producing beta-myrcene, limonene and terpinolene. The polypeptide is Sesquiterpene synthase 9 (Solanum lycopersicum (Tomato)).